Here is a 520-residue protein sequence, read N- to C-terminus: Polyprenol-phosphate-mannose--protein mannosyltransferase (520 aa).

10 helical membrane-spanning segments follow: residues 38 to 58 (WAII…SATA), 119 to 139 (LGWR…IMAI), 145 to 165 (GSTM…VLLV), 168 to 188 (RFGM…WALI), 237 to 257 (WSGL…DLWL), 274 to 294 (DVIP…IWSW), 388 to 408 (IYLF…LWAL), 418 to 438 (GYVV…AAYD), 441 to 461 (MYFF…ALAC), and 485 to 505 (YISL…GFVI).

Belongs to the glycosyltransferase 39 family.

Its subcellular location is the cell membrane. The protein operates within protein modification; protein glycosylation. In terms of biological role, protein O-mannosyltransferase that catalyzes the transfer of a single mannose residue from a polyprenol phospho-mannosyl lipidic donor to the hydroxyl group of selected serine and threonine residues in acceptor proteins. This chain is Polyprenol-phosphate-mannose--protein mannosyltransferase (pmt), found in Corynebacterium glutamicum (strain ATCC 13032 / DSM 20300 / JCM 1318 / BCRC 11384 / CCUG 27702 / LMG 3730 / NBRC 12168 / NCIMB 10025 / NRRL B-2784 / 534).